The primary structure comprises 144 residues: 3-dehydroquinate dehydratase (144 aa).

Tyr22 acts as the Proton acceptor in catalysis. 3 residues coordinate substrate: Asn73, His79, and Asp86. His99 functions as the Proton donor in the catalytic mechanism. Residues 100–101 (LS) and Arg110 each bind substrate.

It belongs to the type-II 3-dehydroquinase family. Homododecamer.

It carries out the reaction 3-dehydroquinate = 3-dehydroshikimate + H2O. Its pathway is metabolic intermediate biosynthesis; chorismate biosynthesis; chorismate from D-erythrose 4-phosphate and phosphoenolpyruvate: step 3/7. Its function is as follows. Catalyzes a trans-dehydration via an enolate intermediate. The sequence is that of 3-dehydroquinate dehydratase from Herpetosiphon aurantiacus (strain ATCC 23779 / DSM 785 / 114-95).